Consider the following 193-residue polypeptide: Cryptic protein (193 aa).

The signal sequence occupies residues 1–25 (MFWRKHVRILFTVTLIWQAIHLGKG). Asparagine 38 and asparagine 60 each carry an N-linked (GlcNAc...) asparagine glycan. 2 disulfide bridges follow: cysteine 91–cysteine 103 and cysteine 105–cysteine 114. One can recognise an EGF-like domain in the interval 91-115 (CQNGGTCILGAFCACPKHFSGRHCE).

Belongs to the EGF-CFC (Cripto-1/FRL1/Cryptic) family.

It localises to the cell membrane. Its subcellular location is the secreted. Functionally, may play a role in mesoderm and/or neural patterning during gastrulation. This chain is Cryptic protein (CFC1), found in Gallus gallus (Chicken).